The primary structure comprises 516 residues: GMP synthase [glutamine-hydrolyzing] (516 aa).

In terms of domain architecture, Glutamine amidotransferase type-1 spans 8-198 (KILILDFGSQ…VVNICGCDTL (191 aa)). Cys84 acts as the Nucleophile in catalysis. Residues His172 and Glu174 contribute to the active site. Residues 199-391 (WNIENIIEND…LGLPYNMLYR (193 aa)) form the GMPS ATP-PPase domain. Residue 226–232 (SGGVDSS) participates in ATP binding.

In terms of assembly, homodimer.

It carries out the reaction XMP + L-glutamine + ATP + H2O = GMP + L-glutamate + AMP + diphosphate + 2 H(+). It participates in purine metabolism; GMP biosynthesis; GMP from XMP (L-Gln route): step 1/1. Functionally, catalyzes the synthesis of GMP from XMP. In Francisella tularensis subsp. novicida (strain U112), this protein is GMP synthase [glutamine-hydrolyzing].